The chain runs to 529 residues: Bifunctional purine biosynthesis protein PurH (529 aa).

An MGS-like domain is found at 1–148 (MQQRRPVRRA…KNHKDVAIVV (148 aa)).

It belongs to the PurH family.

The enzyme catalyses (6R)-10-formyltetrahydrofolate + 5-amino-1-(5-phospho-beta-D-ribosyl)imidazole-4-carboxamide = 5-formamido-1-(5-phospho-D-ribosyl)imidazole-4-carboxamide + (6S)-5,6,7,8-tetrahydrofolate. The catalysed reaction is IMP + H2O = 5-formamido-1-(5-phospho-D-ribosyl)imidazole-4-carboxamide. Its pathway is purine metabolism; IMP biosynthesis via de novo pathway; 5-formamido-1-(5-phospho-D-ribosyl)imidazole-4-carboxamide from 5-amino-1-(5-phospho-D-ribosyl)imidazole-4-carboxamide (10-formyl THF route): step 1/1. It functions in the pathway purine metabolism; IMP biosynthesis via de novo pathway; IMP from 5-formamido-1-(5-phospho-D-ribosyl)imidazole-4-carboxamide: step 1/1. The chain is Bifunctional purine biosynthesis protein PurH from Klebsiella pneumoniae subsp. pneumoniae (strain ATCC 700721 / MGH 78578).